Reading from the N-terminus, the 122-residue chain is Large ribosomal subunit protein bL12 (122 aa).

This sequence belongs to the bacterial ribosomal protein bL12 family. Homodimer. Part of the ribosomal stalk of the 50S ribosomal subunit. Forms a multimeric L10(L12)X complex, where L10 forms an elongated spine to which 2 to 4 L12 dimers bind in a sequential fashion. Binds GTP-bound translation factors.

Forms part of the ribosomal stalk which helps the ribosome interact with GTP-bound translation factors. Is thus essential for accurate translation. The protein is Large ribosomal subunit protein bL12 of Stutzerimonas stutzeri (strain A1501) (Pseudomonas stutzeri).